The chain runs to 301 residues: uncharacterized protein (301 aa).

Belongs to the asfivirus E301R family. Interacts with host IRF3.

Functionally, plays a role in the inhibition of host innate immune system by acting as a negatively regulator of type I interferon production. Mechanistically, interacts with and prevents host IRF3 nuclear localization to inhibit its transcriptional activity. This is an uncharacterized protein from African swine fever virus (strain Badajoz 1971 Vero-adapted) (Ba71V).